The following is a 642-amino-acid chain: Threonine--tRNA ligase (642 aa).

The region spanning M1 to T61 is the TGS domain. Positions D243–P534 are catalytic. Positions 334, 385, and 511 each coordinate Zn(2+).

It belongs to the class-II aminoacyl-tRNA synthetase family. In terms of assembly, homodimer. Zn(2+) serves as cofactor.

The protein localises to the cytoplasm. It carries out the reaction tRNA(Thr) + L-threonine + ATP = L-threonyl-tRNA(Thr) + AMP + diphosphate + H(+). In terms of biological role, catalyzes the attachment of threonine to tRNA(Thr) in a two-step reaction: L-threonine is first activated by ATP to form Thr-AMP and then transferred to the acceptor end of tRNA(Thr). Also edits incorrectly charged L-seryl-tRNA(Thr). In Shewanella denitrificans (strain OS217 / ATCC BAA-1090 / DSM 15013), this protein is Threonine--tRNA ligase.